The following is a 373-amino-acid chain: tRNA (guanine(26)-N(2))-dimethyltransferase (373 aa).

Residues 2–365 (KIISEGETKL…AELSDLVVLI (364 aa)) form the Trm1 methyltransferase domain. The S-adenosyl-L-methionine site is built by R35, R66, D86, D113, and A114.

Belongs to the class I-like SAM-binding methyltransferase superfamily. Trm1 family.

It carries out the reaction guanosine(26) in tRNA + 2 S-adenosyl-L-methionine = N(2)-dimethylguanosine(26) in tRNA + 2 S-adenosyl-L-homocysteine + 2 H(+). In terms of biological role, dimethylates a single guanine residue at position 26 of a number of tRNAs using S-adenosyl-L-methionine as donor of the methyl groups. This Methanococcus maripaludis (strain C7 / ATCC BAA-1331) protein is tRNA (guanine(26)-N(2))-dimethyltransferase.